Reading from the N-terminus, the 501-residue chain is MILIMQKKNLWLHLLGLVILTLLSAYAVVKYPINLGLDLKGGVEFLLEPDFSVAIEREYEDLARNLREKLSKFNVLEVYATKEGVIIELLDKKEVENIKKVIQDINPNVIFEEEGDKLVVKFTQKYVEQLKEDIVRQSIEIIRDRIDKLGVTQPVVTRVGKYRILVDLPGFLDVERAKKIIGSTASLELKLVIDVSTDRKELEKKLTPDREILPSRDGREWFLVEKAPVITGQDLKTAYVGVDNLGQPAVNFELKGEAAEKFGKFTEQNIGKRLAIVLDRKVVSAPVIRSKISDRGQITGNFTAQEARDLALILRTGSLPSPLKFLQEKIVGPSLGKDAIEQGIKAGILAIILLAVVLIARYKTAGITANISIFLNVLFLLASMAFLGATLTLPGIAGIILNMGIAVDSNVLIFERVKEELRLGNTVSKAIELGFKRTLSAVWDTHVTLLVASVILFQFGSGPVKGFATTLALGTIASFISNVYYAKVFLDLLNSLKILKI.

6 helical membrane-spanning segments follow: residues 9–29 (NLWLHLLGLVILTLLSAYAVV), 339–359 (AIEQGIKAGILAIILLAVVLI), 371–391 (ISIFLNVLFLLASMAFLGATL), 394–414 (PGIAGIILNMGIAVDSNVLIF), 447–467 (VTLLVASVILFQFGSGPVKGF), and 470–490 (TLALGTIASFISNVYYAKVFL).

It belongs to the SecD/SecF family. SecD subfamily. In terms of assembly, forms a complex with SecF. Part of the essential Sec protein translocation apparatus which comprises SecA, SecYEG and auxiliary proteins SecDF. Other proteins may also be involved.

It is found in the cell inner membrane. In terms of biological role, part of the Sec protein translocase complex. Interacts with the SecYEG preprotein conducting channel. SecDF uses the proton motive force (PMF) to complete protein translocation after the ATP-dependent function of SecA. This is Protein translocase subunit SecD from Aquifex aeolicus (strain VF5).